Here is a 101-residue protein sequence, read N- to C-terminus: Protein S100-A4 (101 aa).

The residue at position 2 (A2) is an N-acetylalanine. At K7 the chain carries N6-acetyllysine. EF-hand domains lie at 12-47 (MVST…SFLG) and 50-85 (TDEA…IAMM). Ca(2+)-binding residues include K28 and E33. K35 is subject to N6-acetyllysine. Ca(2+) is bound by residues D63, N65, D67, E69, and E74.

The protein belongs to the S-100 family. In terms of assembly, homodimer. Interacts with PPFIBP1 in a calcium-dependent mode. Interacts with PGLYRP1; this complex acts as a chemoattractant that promotes lymphocyte movement. Interacts with MYH9; this interaction increases cell motility. Interacts with Annexin 2/ANXA2. Interacts with TP53; this interaction promotes TP53 degradation. Interacts with CCR5. Interacts with FCGR3A; this interaction inhibits PKC-dependent phosphorylation of FCGR3A. Ubiquitously expressed.

The protein localises to the secreted. The protein resides in the nucleus. It localises to the cytoplasm. Its function is as follows. Calcium-binding protein that plays a role in various cellular processes including motility, angiogenesis, cell differentiation, apoptosis, and autophagy. Increases cell motility and invasiveness by interacting with non-muscle myosin heavy chain (NMMHC) IIA/MYH9. Mechanistically, promotes filament depolymerization and increases the amount of soluble myosin-IIA, resulting in the formation of stable protrusions facilitating chemotaxis. Also modulates the pro-apoptotic function of TP53 by binding to its C-terminal transactivation domain within the nucleus and reducing its protein levels. Within the extracellular space, stimulates cytokine production including granulocyte colony-stimulating factor and CCL24 from T-lymphocytes. In addition, stimulates T-lymphocyte chemotaxis by acting as a chemoattractant complex with PGLYRP1 that promotes lymphocyte migration via CCR5 and CXCR3 receptors. This Homo sapiens (Human) protein is Protein S100-A4 (S100A4).